Here is a 127-residue protein sequence, read N- to C-terminus: uncharacterized protein (127 aa).

It belongs to the transcriptional regulatory CopG/NikR family.

This is an uncharacterized protein from Methanocaldococcus jannaschii (strain ATCC 43067 / DSM 2661 / JAL-1 / JCM 10045 / NBRC 100440) (Methanococcus jannaschii).